The following is a 317-amino-acid chain: Probable deoxyhypusine synthase 1 (317 aa).

The active-site Nucleophile is K285.

It belongs to the deoxyhypusine synthase family. NAD(+) serves as cofactor.

The catalysed reaction is [eIF5A protein]-L-lysine + spermidine = [eIF5A protein]-deoxyhypusine + propane-1,3-diamine. It participates in protein modification; eIF5A hypusination. Catalyzes the NAD-dependent oxidative cleavage of spermidine and the subsequent transfer of the butylamine moiety of spermidine to the epsilon-amino group of a specific lysine residue of the eIF-5A precursor protein to form the intermediate deoxyhypusine residue. The sequence is that of Probable deoxyhypusine synthase 1 (dys1) from Methanosarcina mazei (strain ATCC BAA-159 / DSM 3647 / Goe1 / Go1 / JCM 11833 / OCM 88) (Methanosarcina frisia).